Here is a 209-residue protein sequence, read N- to C-terminus: MKPIRIGIGGPVGSGKTSLVDQLTRVMHEHYHVAVITNDIYTREDAQYLITNGVLAEERIIGVETGGCPHTAIREDASMNFAAIDDLTKRFKNLDIIFIESGGDNLSATFSPELVHGYIYVIDVAEGQDIPRKGGPALTRSDLLLINKTSLAPHVGVDLDIMDQDVKKMRGGRPYIFADVRSQTNVDKVVEWIQHHMLLEGAEAVDNHG.

A GTP-binding site is contributed by 10–17 (GPVGSGKT).

It belongs to the SIMIBI class G3E GTPase family. UreG subfamily. In terms of assembly, homodimer. UreD, UreF and UreG form a complex that acts as a GTP-hydrolysis-dependent molecular chaperone, activating the urease apoprotein by helping to assemble the nickel containing metallocenter of UreC. The UreE protein probably delivers the nickel.

It is found in the cytoplasm. Functionally, facilitates the functional incorporation of the urease nickel metallocenter. This process requires GTP hydrolysis, probably effectuated by UreG. The protein is Urease accessory protein UreG of Lysinibacillus sphaericus (strain C3-41).